Consider the following 125-residue polypeptide: Protein ApaG (125 aa).

Residues 1-125 enclose the ApaG domain; sequence MINSPRVCIQ…FRLAVPTLIH (125 aa).

This is Protein ApaG from Citrobacter koseri (strain ATCC BAA-895 / CDC 4225-83 / SGSC4696).